Reading from the N-terminus, the 346-residue chain is Annexin A1 (346 aa).

A2 carries the post-translational modification N-acetylalanine. S5 is subject to Phosphoserine; by TRPM7. Residue Q19 forms an Isoglutamyl lysine isopeptide (Gln-Lys) (interchain with K-?) linkage. Y21 carries the phosphotyrosine modification. Position 27 is a phosphoserine; by PKC (S27). 2 positions are modified to phosphoserine: S34 and S37. Annexin repeat units follow at residues 42 to 113 (FNVS…AMLK), 114 to 185 (TPAQ…ALAK), 197 to 269 (DLAD…TIVK), and 273 to 344 (STPA…ALCG). K58 carries the post-translational modification N6-acetyllysine. 11 residues coordinate Ca(2+): G59, V60, E62, R97, L100, E105, M127, G129, G131, T132, and E134. T136 is modified (phosphothreonine). D171, G210, and R213 together coordinate Ca(2+). A Glycyl lysine isopeptide (Lys-Gly) (interchain with G-Cter in SUMO1); alternate cross-link involves residue K214. K214 participates in a covalent cross-link: Glycyl lysine isopeptide (Lys-Gly) (interchain with G-Cter in SUMO2); alternate. Ca(2+)-binding residues include G215, D253, E255, and L256. Residue K257 forms a Glycyl lysine isopeptide (Lys-Gly) (interchain with G-Cter in SUMO1) linkage. Residues E261, M286, G288, and G290 each contribute to the Ca(2+) site. Position 312 is an N6-acetyllysine (K312). A disulfide bridge links C324 with C343. Positions 328, 330, and 331 each coordinate Ca(2+). K332 participates in a covalent cross-link: Glycyl lysine isopeptide (Lys-Gly) (interchain with G-Cter in SUMO1). E336 provides a ligand contact to Ca(2+).

It belongs to the annexin family. In terms of assembly, homodimer; non-covalently linked. Homodimer; linked by transglutamylation. Homodimers linked by transglutamylation are observed in placenta, but not in other tissues. Interacts with S100A11. Heterotetramer, formed by two molecules each of S100A11 and ANXA1. Interacts with DYSF. Interacts with EGFR. In terms of processing, phosphorylated by protein kinase C, EGFR and TRPM7. Phosphorylated in response to EGF treatment. Post-translationally, sumoylated. Proteolytically cleaved by cathepsin CTSG to release the active N-terminal peptide Ac2-26. In terms of tissue distribution, detected in lung. Detected at the apical membrane of airway epithelial cells. Detected in intestinal epithelial cells. Detected in skeletal muscle. Detected in prostate. Detected in thymus (at protein level). Detected in stomach, lung, spleen, ovary and uterus, and at lower levels in kidney, thymus and heart.

It is found in the nucleus. Its subcellular location is the cytoplasm. The protein resides in the cell projection. It localises to the cilium. The protein localises to the basolateral cell membrane. It is found in the lateral cell membrane. Its subcellular location is the cell membrane. The protein resides in the apical cell membrane. It localises to the membrane. The protein localises to the early endosome. It is found in the cytoplasmic vesicle membrane. Its subcellular location is the endosome membrane. The protein resides in the secreted. It localises to the extracellular space. The protein localises to the extracellular exosome. It is found in the cytoplasmic vesicle. Its subcellular location is the secretory vesicle lumen. The protein resides in the phagocytic cup. In terms of biological role, plays important roles in the innate immune response as effector of glucocorticoid-mediated responses and regulator of the inflammatory process. Has anti-inflammatory activity. Plays a role in glucocorticoid-mediated down-regulation of the early phase of the inflammatory response. Contributes to the adaptive immune response by enhancing signaling cascades that are triggered by T-cell activation, regulates differentiation and proliferation of activated T-cells. Promotes the differentiation of T-cells into Th1 cells and negatively regulates differentiation into Th2 cells. Has no effect on unstimulated T-cells. Negatively regulates hormone exocytosis via activation of the formyl peptide receptors and reorganization of the actin cytoskeleton. Has high affinity for Ca(2+) and can bind up to eight Ca(2+) ions. Displays Ca(2+)-dependent binding to phospholipid membranes. Plays a role in the formation of phagocytic cups and phagosomes. Plays a role in phagocytosis by mediating the Ca(2+)-dependent interaction between phagosomes and the actin cytoskeleton. Functionally, functions at least in part by activating the formyl peptide receptors and downstream signaling cascades. Promotes chemotaxis of granulocytes and monocytes via activation of the formyl peptide receptors. Promotes rearrangement of the actin cytoskeleton, cell polarization and cell migration. Promotes resolution of inflammation and wound healing. Acts via neutrophil N-formyl peptide receptors to enhance the release of CXCL2. In Mus musculus (Mouse), this protein is Annexin A1 (Anxa1).